The chain runs to 473 residues: Photosystem II CP43 reaction center protein (473 aa).

The propeptide occupies 1 to 14 (MKTLYSLRRFSHVE). Threonine 15 is subject to N-acetylthreonine. Position 15 is a phosphothreonine (threonine 15). 5 helical membrane-spanning segments follow: residues 69–93 (LFEV…PHLA), 134–155 (LLGP…KDRN), 178–200 (KALY…RKIT), 255–275 (KPFA…LSYS), and 291–312 (WFNN…ASQA). Residue glutamate 367 coordinates [CaMn4O5] cluster. The chain crosses the membrane as a helical span at residues 447 to 471 (RARAAAAGFEKGIDRDFEPVLSMTP).

The protein belongs to the PsbB/PsbC family. PsbC subfamily. As to quaternary structure, PSII is composed of 1 copy each of membrane proteins PsbA, PsbB, PsbC, PsbD, PsbE, PsbF, PsbH, PsbI, PsbJ, PsbK, PsbL, PsbM, PsbT, PsbX, PsbY, PsbZ, Psb30/Ycf12, at least 3 peripheral proteins of the oxygen-evolving complex and a large number of cofactors. It forms dimeric complexes. Binds multiple chlorophylls and provides some of the ligands for the Ca-4Mn-5O cluster of the oxygen-evolving complex. It may also provide a ligand for a Cl- that is required for oxygen evolution. PSII binds additional chlorophylls, carotenoids and specific lipids. serves as cofactor.

It localises to the plastid membrane. In terms of biological role, one of the components of the core complex of photosystem II (PSII). It binds chlorophyll and helps catalyze the primary light-induced photochemical processes of PSII. PSII is a light-driven water:plastoquinone oxidoreductase, using light energy to abstract electrons from H(2)O, generating O(2) and a proton gradient subsequently used for ATP formation. The chain is Photosystem II CP43 reaction center protein from Cuscuta gronovii (Common dodder).